A 209-amino-acid polypeptide reads, in one-letter code: Pyrrolidone-carboxylate peptidase (209 aa).

Catalysis depends on residues Glu79, Cys142, and His164.

Belongs to the peptidase C15 family. In terms of assembly, homotetramer.

It localises to the cytoplasm. The catalysed reaction is Release of an N-terminal pyroglutamyl group from a polypeptide, the second amino acid generally not being Pro.. Removes 5-oxoproline from various penultimate amino acid residues except L-proline. The chain is Pyrrolidone-carboxylate peptidase from Saccharolobus islandicus (strain L.S.2.15 / Lassen #1) (Sulfolobus islandicus).